A 580-amino-acid chain; its full sequence is F-box only protein 24 (580 aa).

The region spanning Pro36–Ile82 is the F-box domain. An RCC1 repeat occupies Gly376–Ser425.

In terms of assembly, directly interacts with SKP1 and CUL1.

Its function is as follows. Substrate-recognition component of the SCF (SKP1-CUL1-F-box protein)-type E3 ubiquitin ligase complex. The sequence is that of F-box only protein 24 (FBXO24) from Macaca fascicularis (Crab-eating macaque).